The chain runs to 299 residues: MKTNSEELTVFVQVVESGSFSRAAEQLAMANSAVSRIVKRLEEKLGVNLLNRTTRQLSLTEEGAQYFRRAQRILQEMAAAETEMLAVHEIPQGVLRVDSAMPMVLHLLAPLATKFNERYPHIRLSLVSSEGYINLIERKVDIALRAGELDDSGLRARHLFDSRFRVIASPEYLAKHGTPQSAEELAGHQCLGFTEPGSLNTWAVLDAQGNPYKISPHFTASSGEILRSLCLSGCGIACLSDFLVDNDIAEGKLIPLLAEQTSDKTHPFNAVYYSDKAVNLRLRVFLDFLVEELGNNLCG.

In terms of domain architecture, HTH lysR-type spans 1 to 60 (MKTNSEELTVFVQVVESGSFSRAAEQLAMANSAVSRIVKRLEEKLGVNLLNRTTRQLSLT). Residues 20–39 (FSRAAEQLAMANSAVSRIVK) constitute a DNA-binding region (H-T-H motif).

Belongs to the LysR transcriptional regulatory family. In terms of assembly, forms oligomers. Oligomerization is required for DNA binding.

In terms of biological role, involved in the regulation of bacterial adhesion to host epithelial cells. May play a central regulatory role in meningococcal adhesion, particularly in switching from initial adhesion to intimate adhesion by downregulating the bacterial surface structures that hinder this adhesion. During intimate adhesion, negatively regulates the expression of pilC1, encoding a pilus-associated protein, pilE, encoding the pilin, and sia genes, encoding the capsule. Also negatively regulates its own expression. May also regulate other genes that are involved in intimate adhesion. Binds specifically to the promoter region of pilC1 and crgA (both harboring a CREN element), and pilE and sia (both devoid of a CREN element). Acts through interaction with RNA polymerase (RNAP). Interaction with RNAP leads to the production of short abortive transcripts, suggesting that CrgA may act by preventing RNAP from clearing the promoter. This is HTH-type transcriptional regulator CrgA from Neisseria meningitidis serogroup C (strain 8013).